The following is a 325-amino-acid chain: Delta(1)-pyrroline-2-carboxylate reductase (325 aa).

This sequence belongs to the ornithine cyclodeaminase/mu-crystallin family.

The enzyme catalyses L-proline + NAD(+) = 1-pyrroline-2-carboxylate + NADH + H(+). It carries out the reaction L-proline + NADP(+) = 1-pyrroline-2-carboxylate + NADPH + H(+). Its function is as follows. Catalyzes the reduction of Delta(1)-pyrroline-2-carboxylate (Pyr2C) to L-proline, using preferentially NADPH over NADH as the electron donor. Is likely involved in a degradation pathway that converts trans-3-hydroxy-L-proline (t3LHyp) to L-proline, which allows B.cereus to grow on t3LHyp as a sole carbon source. In Bacillus cereus (strain ATCC 14579 / DSM 31 / CCUG 7414 / JCM 2152 / NBRC 15305 / NCIMB 9373 / NCTC 2599 / NRRL B-3711), this protein is Delta(1)-pyrroline-2-carboxylate reductase.